The primary structure comprises 431 residues: Transmembrane protease serine 11C (431 aa).

Residues 1–33 are Cytoplasmic-facing; sequence MARGQPRRSEEQWTALQNRTECKTKIKLTRCGK. A helical; Signal-anchor for type II membrane protein membrane pass occupies residues 34–54; the sequence is ITLGILTAVLAAVLIGLIAYF. Topologically, residues 55–431 are extracellular; sequence AACGKDSFYY…RDWITSKTGL (377 aa). Positions 60–177 constitute an SEA domain; it reads DSFYYHVSFK…SSFKFSDIAM (118 aa). Residue Asn-99 is glycosylated (N-linked (GlcNAc...) asparagine). One can recognise a Peptidase S1 domain in the interval 200-430; the sequence is VAGGQDAEEG…YRDWITSKTG (231 aa). An intrachain disulfide couples Cys-225 to Cys-241. His-240 acts as the Charge relay system in catalysis. A glycan (N-linked (GlcNAc...) asparagine) is linked at Asn-276. Residue Asp-285 is the Charge relay system of the active site. Asn-347 carries an N-linked (GlcNAc...) asparagine glycan. 2 disulfides stabilise this stretch: Cys-350–Cys-366 and Cys-377–Cys-406. Ser-381 functions as the Charge relay system in the catalytic mechanism.

Belongs to the peptidase S1 family. Post-translationally, proteolytically cleaved via an autocatalytic mechanism. Expressed specifically in Purkinje neurons of the cerebellum (at protein level). Also detected in spinal cord.

Its subcellular location is the cell membrane. The protein localises to the cell projection. It is found in the dendrite. It localises to the perikaryon. In terms of biological role, serine protease which has a preference for Arg or Lys in position P1 and uncharged residues in positions P2 and P3. Shows specificity towards FGF2 in vitro. This Mus musculus (Mouse) protein is Transmembrane protease serine 11C.